A 527-amino-acid chain; its full sequence is MPAPVNIPSMFDTILVLDFGSQYSHLITRRLREFNVYAEMLPCTQKIAELPWKPKGVILSGGPYSVYAEGSPHVDHAVFDLGVPILGICYGMQELAWINGKGVHAGEKKEFGHATIHVEKPSDPLFHGIDNFQVWMSHGDKLNALPTGYEVVATSDNSPYAGIAHTSEKIWGIQFHPEVTHTTKGKQLLQNFAVDICGAAQKWSMENFVDTEIQRIRDLVGPHAEVIGAVSGGVDSTVGAKLMKEAIGDRFHAILVDNGVMRLNECENVKKTLGEGLGINLNVVDAADLFLGKLKGVTDPEKKRKIIGNTFIEVFEEEAAKIQPTHPEAGEIEFLLQGTLYPDVIESISFKGPSQTIKTHHNVGGLLDNMKLKLIEPLRELFKDEVRKLGEIMGIPHDLVWRHPFPGPGIAIRVLGEVTPSQVEIARKADFIYIEEIKKAGIYEEISQAFACLLPVKSVGVMGDQRTYEQVIALRAIETVDFMTADWYIFDANFLKTVARRIVNEVPGVARVVYDITSKPPATVEWE.

Residues 13–202 (TILVLDFGSQ…AVDICGAAQK (190 aa)) form the Glutamine amidotransferase type-1 domain. C89 functions as the Nucleophile in the catalytic mechanism. Residues H176 and E178 contribute to the active site. Residues 203–402 (WSMENFVDTE…MGIPHDLVWR (200 aa)) form the GMPS ATP-PPase domain. ATP is bound at residue 231-237 (SGGVDST). Positions 304, 464, 519, and 525 each coordinate XMP.

In terms of assembly, homodimer. Mg(2+) serves as cofactor.

The protein localises to the cytoplasm. The protein resides in the cytosol. It catalyses the reaction XMP + L-glutamine + ATP + H2O = GMP + L-glutamate + AMP + diphosphate + 2 H(+). It functions in the pathway purine metabolism; GMP biosynthesis; GMP from XMP (L-Gln route): step 1/1. Catalyzes the conversion of xanthine monophosphate (XMP) to GMP in the presence of glutamine and ATP through an adenyl-XMP intermediate. This is GMP synthase [glutamine-hydrolyzing] (GUA1) from Yarrowia lipolytica (strain CLIB 122 / E 150) (Yeast).